The sequence spans 120 residues: Flagellar protein FliT (120 aa).

Positions 1 to 50 (MNDSSLSLKKWHALSALSNTMLSLAQSGKWDELIEQEVAYVSLVEKISIT) are required for homodimerization. Positions 59–97 (IQDQAMVMLNNVLQNEMTLKTLLQERMDELHGLMAQTGK) are fliD binding.

It belongs to the FliT family. In terms of assembly, homodimer. Interacts with FliD and FlhC.

It localises to the cytoplasm. The protein resides in the cytosol. Its function is as follows. Dual-function protein that regulates the transcription of class 2 flagellar operons and that also acts as an export chaperone for the filament-capping protein FliD. As a transcriptional regulator, acts as an anti-FlhDC factor; it directly binds FlhC, thus inhibiting the binding of the FlhC/FlhD complex to class 2 promoters, resulting in decreased expression of class 2 flagellar operons. As a chaperone, effects FliD transition to the membrane by preventing its premature polymerization, and by directing it to the export apparatus. The protein is Flagellar protein FliT of Enterobacter sp. (strain 638).